Here is a 430-residue protein sequence, read N- to C-terminus: Adenylosuccinate synthetase (430 aa).

GTP contacts are provided by residues 12 to 18 and 40 to 42; these read GDEGKGK and GHT. The active-site Proton acceptor is the Asp-13. 2 residues coordinate Mg(2+): Asp-13 and Gly-40. IMP is bound by residues 13–16, 38–41, Thr-130, Arg-144, Gln-224, Thr-239, and Arg-303; these read DEGK and NAGH. The active-site Proton donor is the His-41. 299-305 is a binding site for substrate; it reads VVTGRPR. GTP is bound by residues Arg-305, 331 to 333, and 413 to 415; these read KLD and STS.

The protein belongs to the adenylosuccinate synthetase family. In terms of assembly, homodimer. Mg(2+) serves as cofactor.

It is found in the cytoplasm. The catalysed reaction is IMP + L-aspartate + GTP = N(6)-(1,2-dicarboxyethyl)-AMP + GDP + phosphate + 2 H(+). The protein operates within purine metabolism; AMP biosynthesis via de novo pathway; AMP from IMP: step 1/2. Functionally, plays an important role in the de novo pathway of purine nucleotide biosynthesis. Catalyzes the first committed step in the biosynthesis of AMP from IMP. This Azorhizobium caulinodans (strain ATCC 43989 / DSM 5975 / JCM 20966 / LMG 6465 / NBRC 14845 / NCIMB 13405 / ORS 571) protein is Adenylosuccinate synthetase.